A 101-amino-acid polypeptide reads, in one-letter code: Large ribosomal subunit protein eL30 (101 aa).

This sequence belongs to the eukaryotic ribosomal protein eL30 family.

The sequence is that of Large ribosomal subunit protein eL30 from Pyrobaculum neutrophilum (strain DSM 2338 / JCM 9278 / NBRC 100436 / V24Sta) (Thermoproteus neutrophilus).